The chain runs to 249 residues: 5'-nucleotidase SurE (249 aa).

A divalent metal cation contacts are provided by Asp8, Asp9, Ser39, and Asn91.

It belongs to the SurE nucleotidase family. A divalent metal cation is required as a cofactor.

It is found in the cytoplasm. The enzyme catalyses a ribonucleoside 5'-phosphate + H2O = a ribonucleoside + phosphate. Its function is as follows. Nucleotidase that shows phosphatase activity on nucleoside 5'-monophosphates. The chain is 5'-nucleotidase SurE from Stutzerimonas stutzeri (strain A1501) (Pseudomonas stutzeri).